The chain runs to 158 residues: uncharacterized protein (158 aa).

This is an uncharacterized protein from Ureaplasma parvum serovar 3 (strain ATCC 700970).